A 188-amino-acid polypeptide reads, in one-letter code: dCTP deaminase (188 aa).

DCTP-binding positions include 111–116, 135–137, Q156, Y170, and Q180; these read KSTYAR and TLE. E137 serves as the catalytic Proton donor/acceptor.

The protein belongs to the dCTP deaminase family. In terms of assembly, homotrimer.

It catalyses the reaction dCTP + H2O + H(+) = dUTP + NH4(+). It participates in pyrimidine metabolism; dUMP biosynthesis; dUMP from dCTP (dUTP route): step 1/2. Functionally, catalyzes the deamination of dCTP to dUTP. In Acidovorax sp. (strain JS42), this protein is dCTP deaminase.